Consider the following 134-residue polypeptide: Large ribosomal subunit protein bL17 (134 aa).

It belongs to the bacterial ribosomal protein bL17 family. As to quaternary structure, part of the 50S ribosomal subunit. Contacts protein L32.

This chain is Large ribosomal subunit protein bL17, found in Anaplasma marginale (strain Florida).